The sequence spans 947 residues: Translation initiation factor IF-2 (947 aa).

The disordered stretch occupies residues 55–361; the sequence is TKDAQAGSAK…PVTERKFHEL (307 aa). Over residues 63–73 the composition is skewed to basic and acidic residues; it reads AKDKQVAEQKA. Positions 76-90 are enriched in low complexity; that stretch reads AKATTPQPAAATQEA. 3 stretches are compositionally biased toward basic and acidic residues: residues 103–116, 125–134, and 170–183; these read FKAE…EQAA, SNDRKSDYRQ, and NDGH…DKNR. Low complexity predominate over residues 190–204; it reads RQQDTGRQGQTQAGA. Basic and acidic residues-rich tracts occupy residues 225–249, 257–267, and 294–311; these read ARQR…RQEA, QTEDKKHREAS, and NRPD…DGQK. Positions 316–334 are enriched in low complexity; sequence SWNSQNQVRNQKNSNWNNN. Residues 335-345 show a composition bias toward basic residues; it reads KKNKKGKHHKN. The 170-residue stretch at 448 to 617 folds into the tr-type G domain; the sequence is ERAPVVTIMG…LLVAEVEELK (170 aa). A G1 region spans residues 457–464; that stretch reads GHVDHGKT. 457–464 contacts GTP; that stretch reads GHVDHGKT. The segment at 482–486 is G2; the sequence is GITQH. The interval 503 to 506 is G3; it reads DTPG. GTP contacts are provided by residues 503-507 and 557-560; these read DTPGH and NKID. A G4 region spans residues 557–560; it reads NKID. The segment at 593–595 is G5; the sequence is SAK.

Belongs to the TRAFAC class translation factor GTPase superfamily. Classic translation factor GTPase family. IF-2 subfamily.

The protein resides in the cytoplasm. Functionally, one of the essential components for the initiation of protein synthesis. Protects formylmethionyl-tRNA from spontaneous hydrolysis and promotes its binding to the 30S ribosomal subunits. Also involved in the hydrolysis of GTP during the formation of the 70S ribosomal complex. The polypeptide is Translation initiation factor IF-2 (Streptococcus equi subsp. zooepidemicus (strain MGCS10565)).